The sequence spans 181 residues: Large ribosomal subunit protein uL5c (181 aa).

Belongs to the universal ribosomal protein uL5 family. In terms of assembly, part of the 50S ribosomal subunit; contacts the 5S rRNA.

The protein resides in the plastid. Its subcellular location is the cyanelle. Binds 5S rRNA, forms part of the central protuberance of the 50S subunit. This Cyanophora paradoxa protein is Large ribosomal subunit protein uL5c (rpl5).